The sequence spans 333 residues: Autoinducer 2 import system permease protein LsrD (333 aa).

10 helical membrane passes run Tyr-7 to Ala-27, Ile-45 to Ile-65, Thr-70 to Ala-90, Ala-91 to Leu-111, Leu-118 to Ile-138, Leu-162 to Phe-182, Thr-212 to Val-232, Ser-240 to Asn-260, Ile-261 to Leu-281, and Ala-288 to Val-308.

The protein belongs to the binding-protein-dependent transport system permease family. AraH/RbsC subfamily. In terms of assembly, the complex is composed of two ATP-binding proteins (LsrA), two transmembrane proteins (LsrC and LsrD) and a solute-binding protein (LsrB).

It is found in the cell inner membrane. Functionally, part of the ABC transporter complex LsrABCD involved in autoinducer 2 (AI-2) import. Probably responsible for the translocation of the substrate across the membrane. The chain is Autoinducer 2 import system permease protein LsrD (lsrD) from Photorhabdus luminescens (Xenorhabdus luminescens).